The chain runs to 275 residues: Large ribosomal subunit protein uL2 (275 aa).

Positions 223-275 (VAMNPVDHPHGGGEGRTSGGRHPVSPWGQPTKGYKTRSNKRTDKYIVRRRNKK) are disordered.

The protein belongs to the universal ribosomal protein uL2 family. In terms of assembly, part of the 50S ribosomal subunit. Forms a bridge to the 30S subunit in the 70S ribosome.

One of the primary rRNA binding proteins. Required for association of the 30S and 50S subunits to form the 70S ribosome, for tRNA binding and peptide bond formation. It has been suggested to have peptidyltransferase activity; this is somewhat controversial. Makes several contacts with the 16S rRNA in the 70S ribosome. In Shewanella halifaxensis (strain HAW-EB4), this protein is Large ribosomal subunit protein uL2.